An 88-amino-acid polypeptide reads, in one-letter code: Alpha-latrotoxin associated low molecular weight protein 2 (88 aa).

The first 19 residues, 1-19, serve as a signal peptide directing secretion; it reads MLKLICIAFLVTVLTLVAG. Cystine bridges form between Cys30–Cys66, Cys46–Cys62, and Cys49–Cys75.

This sequence belongs to the arthropod CHH/MIH/GIH/VIH hormone family. Expressed by the venom gland.

The protein localises to the secreted. In terms of biological role, may increase the toxicity of alpha-latrotoxin and/or other venom components. Is non-toxic to mice and to the cockroach Periplaneta americana. The chain is Alpha-latrotoxin associated low molecular weight protein 2 from Latrodectus hesperus (Western black widow spider).